The chain runs to 419 residues: MTIVMIIVFCALMMLAVPVGYALIIAAGVAVLFNGYLPLSIVAQQIYDQTQSFPMLALPFFMLAGTLMLGGELGRQLLELASHAMQRWRGGPLSTTVVSSVVFGGVSGSAVANASALGSVLIPWQKKHGFPPALCAANNATSAVIDVLIPPSIPMILFSLVSGVSVANLFVAGILPGILMAASFVFVCWFVSVRRGYASQPSQTSRRQLATLALKSLPAVLLPVLIILFLRFGLATPTEVAVLSVVYSLALSLLYYRDLTWKRFCDNVVEAGMATGVVMLVIMGSAAVGWVLTFDQAPQQMADWVAANISSPIVIILMMNILMLIVGMPLDMPPAILLLGPIFVPLADTIGLDRVQLGLMMVINLGIGLYTPPIGTTLFISSSIAKSPLGETTRELWPFFAMAMTLLLAVSFIPALTLY.

13 helical membrane passes run 5 to 25, 26 to 46, 53 to 73, 102 to 122, 144 to 164, 170 to 190, 210 to 230, 234 to 254, 274 to 294, 309 to 329, 332 to 352, 360 to 380, and 396 to 416; these read MIIVFCALMMLAVPVGYALII, AAGVAVLFNGYLPLSIVAQQI, FPMLALPFFMLAGTLMLGGEL, VFGGVSGSAVANASALGSVLI, VIDVLIPPSIPMILFSLVSGV, FVAGILPGILMAASFVFVCWF, ATLALKSLPAVLLPVLIILFL, LATPTEVAVLSVVYSLALSLL, ATGVVMLVIMGSAAVGWVLTF, ISSPIVIILMMNILMLIVGMP, MPPAILLLGPIFVPLADTIGL, MMVINLGIGLYTPPIGTTLFI, and LWPFFAMAMTLLLAVSFIPAL.

This sequence belongs to the YiaN/YgiK family.

It localises to the cell inner membrane. This is an uncharacterized protein from Sinorhizobium fredii (strain NBRC 101917 / NGR234).